The following is a 1087-amino-acid chain: Collagen alpha-2(I) chain (1087 aa).

Residues alanine 1 to valine 931 form a disordered region. Low complexity-rich tracts occupy residues glutamate 83–proline 120, glutamate 150–proline 159, and proline 166–proline 187. The span at phenylalanine 189 to glutamine 199 shows a compositional bias: pro residues. The span at proline 201–alanine 211 shows a compositional bias: low complexity. Gly residues predominate over residues glycine 218 to glycine 227. 5 stretches are compositionally biased toward low complexity: residues glutamate 228 to glutamine 241, alanine 278 to serine 321, proline 335 to proline 345, lysine 360 to threonine 384, and glutamine 396 to proline 408. Residues glycine 409–glycine 418 are compositionally biased toward gly residues. Over residues asparagine 443–glutamine 453 the composition is skewed to low complexity. Gly residues predominate over residues glycine 466–glycine 493. Residues lysine 504–proline 515 show a composition bias toward basic and acidic residues. Composition is skewed to low complexity over residues proline 560–arginine 602, phenylalanine 613–lysine 640, and proline 677–glutamine 695. Gly residues predominate over residues glycine 708–glycine 717. 2 stretches are compositionally biased toward low complexity: residues glutamate 718–proline 740 and proline 776–proline 788. Positions glycine 792–glycine 812 are enriched in gly residues. Low complexity predominate over residues alanine 813 to proline 828. A compositionally biased stretch (basic and acidic residues) spans arginine 829–leucine 843. Composition is skewed to low complexity over residues leucine 849–asparagine 868 and alanine 897–proline 909. The segment covering alanine 910–proline 924 has biased composition (pro residues). Residues tyrosine 929–lysine 1087 form the Fibrillar collagen NC1 domain.

It belongs to the fibrillar collagen family.

It is found in the secreted. It localises to the extracellular space. The protein resides in the extracellular matrix. This is Collagen alpha-2(I) chain from Epinephelus costae (Goldblotch grouper).